Consider the following 213-residue polypeptide: ATP synthase peripheral stalk subunit OSCP, mitochondrial (213 aa).

The N-terminal 23 residues, 1–23 (MASQAVSGLSRQVRCFSTSVVRP), are a transit peptide targeting the mitochondrion. Positions 5–23 (AVSGLSRQVRCFSTSVVRP) match the SIFI-degron motif. K54, K60, K70, and K73 each carry N6-acetyllysine. At K90 the chain carries N6-succinyllysine. N6-acetyllysine; alternate occurs at positions 100, 158, and 162. An N6-succinyllysine; alternate mark is found at K100, K158, and K162. N6-acetyllysine occurs at positions 172, 176, and 192. N6-succinyllysine is present on K199.

This sequence belongs to the ATPase delta chain family. In terms of assembly, component of the ATP synthase complex composed at least of ATP5F1A/subunit alpha, ATP5F1B/subunit beta, ATP5MC1/subunit c (homooctomer), MT-ATP6/subunit a, MT-ATP8/subunit 8, ATP5ME/subunit e, ATP5MF/subunit f, ATP5MG/subunit g, ATP5MK/subunit k, ATP5MJ/subunit j, ATP5F1C/subunit gamma, ATP5F1D/subunit delta, ATP5F1E/subunit epsilon, ATP5PF/subunit F6, ATP5PB/subunit b, ATP5PD/subunit d, ATP5PO/subunit OSCP. ATP synthase complex consists of a soluble F(1) head domain (subunits alpha(3) and beta(3)) - the catalytic core - and a membrane F(0) domain - the membrane proton channel (subunits c, a, 8, e, f, g, k and j). These two domains are linked by a central stalk (subunits gamma, delta, and epsilon) rotating inside the F1 region and a stationary peripheral stalk (subunits F6, b, d, and OSCP). Post-translationally, acetylation at Lys-162 decreases ATP production. Deacetylated by SIRT3. In terms of processing, in response to mitochondrial stress, the precursor protein is ubiquitinated by the SIFI complex in the cytoplasm before mitochondrial import, leading to its degradation. Within the SIFI complex, UBR4 initiates ubiquitin chain that are further elongated or branched by KCMF1.

It localises to the mitochondrion. The protein resides in the mitochondrion inner membrane. In terms of biological role, subunit OSCP, of the mitochondrial membrane ATP synthase complex (F(1)F(0) ATP synthase or Complex V) that produces ATP from ADP in the presence of a proton gradient across the membrane which is generated by electron transport complexes of the respiratory chain. ATP synthase complex consist of a soluble F(1) head domain - the catalytic core - and a membrane F(1) domain - the membrane proton channel. These two domains are linked by a central stalk rotating inside the F(1) region and a stationary peripheral stalk. During catalysis, ATP synthesis in the catalytic domain of F(1) is coupled via a rotary mechanism of the central stalk subunits to proton translocation. In vivo, can only synthesize ATP although its ATP hydrolase activity can be activated artificially in vitro. Part of the complex F(0) domain. Part of the complex F(0) domain and the peripheric stalk, which acts as a stator to hold the catalytic alpha(3)beta(3) subcomplex and subunit a/ATP6 static relative to the rotary elements. This is ATP synthase peripheral stalk subunit OSCP, mitochondrial from Sus scrofa (Pig).